Consider the following 517-residue polypeptide: Cytochrome P450 monooxygenase calE (517 aa).

Residue N8 is glycosylated (N-linked (GlcNAc...) asparagine). A helical transmembrane segment spans residues 14–34 (SLMHHYILIAILVASIIAMVV). A heme-binding site is contributed by C458.

The protein belongs to the cytochrome P450 family. Heme serves as cofactor.

The protein resides in the membrane. The protein operates within secondary metabolite biosynthesis. Functionally, cytochrome P450 monooxygenase; part of the gene cluster that mediates the biosynthesis of calbistrin A and related compounds. Calbistrin A is a secondary metabolite with an interesting structure that was recently found to have bioactivity against leukemia cells. It consists of two polyketides linked by an ester bond: a bicyclic decalin containing polyketide and a linear 12 carbon dioic acid structure. The polyketide synthase calA is probably responsible for forming the decalin moiety. Because calA lacks a designated enoylreductase (ER) domain, the required activity is provided by the trans-enoyl reductase calK. Following release from the PKS, calF then probably catalyzes the oxidation and the subsequent Diels Alder cycloisomerization that lead to the formation of the decalin moiety. The decalin polyketide backbone includes two C-methyl groups, at C7 and C11 in backbone, of which the C7 position is probably methylated by the methyltransferase domain of calA. A candidate for adding the methyl group at C11, if not done by CalA, is the cluster methyltransferase calH. Several additional tailoring enzymes within the cluster could be involved in the modification of the decalin polyketide product. Those include the 3 cytochrome P450 monooxygenases CalE, CalG and CalL, of which one might be responsible for the introduction of the extra hydroxyl group attached to the backbone of the decalin moiety, at position C9 in the backbone, that allows for attachment of the linear moiety. One tailoring enzyme activity that is expected to be involved in biosynthesis of calbistrin is an acyltransferase for connecting the two polyketide synthase products, and which could be performed by the cluster acyltransferase calJ. The enzyme responsible for the biosynthesis of the linear moiety, probably a second PKS, has not been identified yet. The protein is Cytochrome P450 monooxygenase calE of Penicillium decumbens.